The chain runs to 83 residues: Apolipoprotein C-I (83 aa).

The N-terminal stretch at 1-26 (MRLILSLPVLAVVLAMVLEGPAPAQA) is a signal peptide.

The protein belongs to the apolipoprotein C1 family.

It localises to the secreted. Its function is as follows. Inhibitor of lipoprotein binding to the low density lipoprotein (LDL) receptor, LDL receptor-related protein, and very low density lipoprotein (VLDL) receptor. Associates with high density lipoproteins (HDL) and the triacylglycerol-rich lipoproteins in the plasma and makes up about 10% of the protein of the VLDL and 2% of that of HDL. Appears to interfere directly with fatty acid uptake and is also the major plasma inhibitor of cholesteryl ester transfer protein (CETP). Binds free fatty acids and reduces their intracellular esterification. Modulates the interaction of APOE with beta-migrating VLDL and inhibits binding of beta-VLDL to the LDL receptor-related protein. The polypeptide is Apolipoprotein C-I (APOC1) (Rousettus aegyptiacus (Egyptian fruit bat)).